An 80-amino-acid chain; its full sequence is Acyl carrier protein (80 aa).

Residues 4 to 79 (NSIEEKVRSI…DVVAYIEKVQ (76 aa)) form the Carrier domain. Serine 39 is modified (O-(pantetheine 4'-phosphoryl)serine).

The protein belongs to the acyl carrier protein (ACP) family. Post-translationally, 4'-phosphopantetheine is transferred from CoA to a specific serine of apo-ACP by AcpS. This modification is essential for activity because fatty acids are bound in thioester linkage to the sulfhydryl of the prosthetic group.

The protein localises to the cytoplasm. The protein operates within lipid metabolism; fatty acid biosynthesis. Functionally, carrier of the growing fatty acid chain in fatty acid biosynthesis. The sequence is that of Acyl carrier protein from Akkermansia muciniphila (strain ATCC BAA-835 / DSM 22959 / JCM 33894 / BCRC 81048 / CCUG 64013 / CIP 107961 / Muc).